Reading from the N-terminus, the 135-residue chain is Small ribosomal subunit protein bS6 (135 aa).

The segment at 99–135 (EKSAMLSHLDRNAHAGQDEERSRSPRRQRENAIERVE) is disordered.

The protein belongs to the bacterial ribosomal protein bS6 family.

Functionally, binds together with bS18 to 16S ribosomal RNA. The chain is Small ribosomal subunit protein bS6 from Bartonella tribocorum (strain CIP 105476 / IBS 506).